The chain runs to 249 residues: tRNA (guanine-N(1)-)-methyltransferase (249 aa).

S-adenosyl-L-methionine is bound by residues glycine 112 and 132–137 (LGDFVL).

It belongs to the RNA methyltransferase TrmD family. As to quaternary structure, homodimer.

It localises to the cytoplasm. The enzyme catalyses guanosine(37) in tRNA + S-adenosyl-L-methionine = N(1)-methylguanosine(37) in tRNA + S-adenosyl-L-homocysteine + H(+). Specifically methylates guanosine-37 in various tRNAs. This chain is tRNA (guanine-N(1)-)-methyltransferase, found in Geobacter sp. (strain M21).